The following is an 812-amino-acid chain: Probable inorganic carbon transporter subunit DabA (812 aa).

Residues C337, D339, H499, and C514 each contribute to the Zn(2+) site.

The protein belongs to the inorganic carbon transporter (TC 9.A.2) DabA family. Forms a complex with DabB. Zn(2+) is required as a cofactor.

It localises to the cell inner membrane. In terms of biological role, part of an energy-coupled inorganic carbon pump. This is Probable inorganic carbon transporter subunit DabA from Xanthomonas oryzae pv. oryzae (strain MAFF 311018).